We begin with the raw amino-acid sequence, 418 residues long: L-rhamnose isomerase (418 aa).

Mn(2+) is bound by residues H262, D294, and D296.

This sequence belongs to the rhamnose isomerase family. As to quaternary structure, homotetramer. Mn(2+) serves as cofactor.

It is found in the cytoplasm. The enzyme catalyses L-rhamnopyranose = L-rhamnulose. It functions in the pathway carbohydrate degradation; L-rhamnose degradation; glycerone phosphate from L-rhamnose: step 1/3. Catalyzes the interconversion of L-rhamnose and L-rhamnulose. The sequence is that of L-rhamnose isomerase from Yersinia pestis bv. Antiqua (strain Antiqua).